A 490-amino-acid polypeptide reads, in one-letter code: Cytochrome P450 2C19 (490 aa).

Residue Cys-435 coordinates heme.

Belongs to the cytochrome P450 family. Heme serves as cofactor.

It localises to the endoplasmic reticulum membrane. The protein resides in the microsome membrane. The enzyme catalyses an organic molecule + reduced [NADPH--hemoprotein reductase] + O2 = an alcohol + oxidized [NADPH--hemoprotein reductase] + H2O + H(+). The catalysed reaction is (5Z,8Z,11Z)-eicosatrienoate + reduced [NADPH--hemoprotein reductase] + O2 = 19-hydroxy-(5Z,8Z,11Z)-eicosatrienoate + oxidized [NADPH--hemoprotein reductase] + H2O + H(+). It catalyses the reaction (5Z,8Z,11Z,14Z)-eicosatetraenoate + reduced [NADPH--hemoprotein reductase] + O2 = 19-hydroxy-(5Z,8Z,11Z,14Z)-eicosatetraenoate + oxidized [NADPH--hemoprotein reductase] + H2O + H(+). It carries out the reaction (5Z,8Z,11Z,14Z,17Z)-eicosapentaenoate + reduced [NADPH--hemoprotein reductase] + O2 = 19-hydroxy-(5Z,8Z,11Z,14Z,17Z)-eicosapentaenoate + oxidized [NADPH--hemoprotein reductase] + H2O + H(+). The enzyme catalyses (4Z,7Z,10Z,13Z,16Z,19Z)-docosahexaenoate + reduced [NADPH--hemoprotein reductase] + O2 = 21-hydroxy-(4Z,7Z,10Z,13Z,16Z,19Z)-docosahexaenoate + oxidized [NADPH--hemoprotein reductase] + H2O + H(+). The catalysed reaction is (5Z,8Z,11Z,14Z)-eicosatetraenoate + reduced [NADPH--hemoprotein reductase] + O2 = (8R,9S)-epoxy-(5Z,11Z,14Z)-eicosatrienoate + oxidized [NADPH--hemoprotein reductase] + H2O + H(+). It catalyses the reaction (5Z,8Z,11Z,14Z)-eicosatetraenoate + reduced [NADPH--hemoprotein reductase] + O2 = (11R,12S)-epoxy-(5Z,8Z,14Z)-eicosatrienoate + oxidized [NADPH--hemoprotein reductase] + H2O + H(+). It carries out the reaction (5Z,8Z,11Z,14Z)-eicosatetraenoate + reduced [NADPH--hemoprotein reductase] + O2 = (11S,12R)-epoxy-(5Z,8Z,14Z)-eicosatrienoate + oxidized [NADPH--hemoprotein reductase] + H2O + H(+). The enzyme catalyses (5Z,8Z,11Z,14Z)-eicosatetraenoate + reduced [NADPH--hemoprotein reductase] + O2 = (14R,15S)-epoxy-(5Z,8Z,11Z)-eicosatrienoate + oxidized [NADPH--hemoprotein reductase] + H2O + H(+). The catalysed reaction is (5Z,8Z,11Z,14Z,17Z)-eicosapentaenoate + reduced [NADPH--hemoprotein reductase] + O2 = (17R,18S)-epoxy-(5Z,8Z,11Z,14Z)-eicosatetraenoate + oxidized [NADPH--hemoprotein reductase] + H2O + H(+). It catalyses the reaction (4Z,7Z,10Z,13Z,16Z,19Z)-docosahexaenoate + reduced [NADPH--hemoprotein reductase] + O2 = (19R,20S)-epoxy-(4Z,7Z,10Z,13Z,16Z)-docosapentaenoate + oxidized [NADPH--hemoprotein reductase] + H2O + H(+). It carries out the reaction (4Z,7Z,10Z,13Z,16Z,19Z)-docosahexaenoate + reduced [NADPH--hemoprotein reductase] + O2 = (19S,20R)-epoxy-(4Z,7Z,10Z,13Z,16Z)-docosapentaenoate + oxidized [NADPH--hemoprotein reductase] + H2O + H(+). The enzyme catalyses (4R)-limonene + reduced [NADPH--hemoprotein reductase] + O2 = (1R,5S)-carveol + oxidized [NADPH--hemoprotein reductase] + H2O + H(+). The catalysed reaction is (4S)-limonene + reduced [NADPH--hemoprotein reductase] + O2 = (1S,5R)-carveol + oxidized [NADPH--hemoprotein reductase] + H2O + H(+). It catalyses the reaction (4S)-limonene + reduced [NADPH--hemoprotein reductase] + O2 = (4S)-perillyl alcohol + oxidized [NADPH--hemoprotein reductase] + H2O + H(+). It carries out the reaction fenbendazole + reduced [NADPH--hemoprotein reductase] + O2 = 4'-hydroxyfenbendazole + oxidized [NADPH--hemoprotein reductase] + H2O + H(+). It functions in the pathway lipid metabolism; fatty acid metabolism. It participates in terpene metabolism; (4R)-limonene degradation. Its function is as follows. A cytochrome P450 monooxygenase involved in the metabolism of polyunsaturated fatty acids (PUFA). Mechanistically, uses molecular oxygen inserting one oxygen atom into a substrate, and reducing the second into a water molecule, with two electrons provided by NADPH via cytochrome P450 reductase (NADPH--hemoprotein reductase). Catalyzes the hydroxylation of carbon-hydrogen bonds. Hydroxylates PUFA specifically at the omega-1 position. Catalyzes the epoxidation of double bonds of PUFA. Also metabolizes plant monoterpenes such as limonene. Oxygenates (R)- and (S)-limonene to produce carveol and perillyl alcohol. Responsible for the metabolism of a number of therapeutic agents such as the anticonvulsant drug S-mephenytoin, omeprazole, proguanil, certain barbiturates, diazepam, propranolol, citalopram and imipramine. Hydroxylates fenbendazole at the 4' position. The polypeptide is Cytochrome P450 2C19 (CYP2C19) (Homo sapiens (Human)).